Reading from the N-terminus, the 371-residue chain is DNA repair and recombination protein rti1 (371 aa).

The interval Ile-346–Lys-371 is disordered. Residues Ser-358–Lys-371 show a composition bias toward polar residues.

Belongs to the RAD52 family. As to quaternary structure, interacts with rph51 and rph54.

Its function is as follows. Active in the repair of DNA damage and in mating-type switching. Probably involved in the repair of DNA double-strands breaks. Has a role in promoting S phase completion. The chain is DNA repair and recombination protein rti1 (rti1) from Schizosaccharomyces pombe (strain 972 / ATCC 24843) (Fission yeast).